The chain runs to 89 residues: Large ribosomal subunit protein bL27 (89 aa).

This sequence belongs to the bacterial ribosomal protein bL27 family.

This is Large ribosomal subunit protein bL27 from Synechococcus sp. (strain JA-3-3Ab) (Cyanobacteria bacterium Yellowstone A-Prime).